The sequence spans 485 residues: NADH-quinone oxidoreductase subunit N (485 aa).

14 helical membrane passes run 10–30, 40–60, 71–91, 107–127, 129–149, 164–184, 209–229, 248–268, 276–296, 304–324, 336–356, 377–397, 410–430, and 454–474; these read ILPE…GLFL, IFFQ…EYLI, VVFS…AVFV, GDFY…TAAH, LVTI…LIAI, FVLG…VYGM, FLLV…GAFP, IVAT…LFVG, WIYL…LVAL, LLGY…TLNP, VIVY…ISVG, AFIL…GGFI, GNYF…FYYV, and LIAL…PMLL.

Belongs to the complex I subunit 2 family. As to quaternary structure, NDH-1 is composed of 14 different subunits. Subunits NuoA, H, J, K, L, M, N constitute the membrane sector of the complex.

The protein localises to the cell inner membrane. It carries out the reaction a quinone + NADH + 5 H(+)(in) = a quinol + NAD(+) + 4 H(+)(out). In terms of biological role, NDH-1 shuttles electrons from NADH, via FMN and iron-sulfur (Fe-S) centers, to quinones in the respiratory chain. The immediate electron acceptor for the enzyme in this species is believed to be ubiquinone. Couples the redox reaction to proton translocation (for every two electrons transferred, four hydrogen ions are translocated across the cytoplasmic membrane), and thus conserves the redox energy in a proton gradient. This is NADH-quinone oxidoreductase subunit N from Francisella tularensis subsp. holarctica (strain FTNF002-00 / FTA).